A 142-amino-acid chain; its full sequence is Small heat shock protein IbpB (142 aa).

Positions 26-137 (SGESQSFPPY…PPQRIAINER (112 aa)) constitute a sHSP domain.

The protein belongs to the small heat shock protein (HSP20) family. As to quaternary structure, homodimer. Forms homomultimers of about 100-150 subunits at optimal growth temperatures. Conformation changes to oligomers at high temperatures or high ionic concentrations. The decrease in size of the multimers is accompanied by an increase in chaperone activity.

Its subcellular location is the cytoplasm. Its function is as follows. Associates with aggregated proteins, together with IbpA, to stabilize and protect them from irreversible denaturation and extensive proteolysis during heat shock and oxidative stress. Aggregated proteins bound to the IbpAB complex are more efficiently refolded and reactivated by the ATP-dependent chaperone systems ClpB and DnaK/DnaJ/GrpE. Its activity is ATP-independent. This is Small heat shock protein IbpB from Salmonella typhi.